A 146-amino-acid polypeptide reads, in one-letter code: Hut operon positive regulatory protein (146 aa).

Belongs to the HutP family. As to quaternary structure, homohexamer.

Functionally, antiterminator that binds to cis-acting regulatory sequences on the mRNA in the presence of histidine, thereby suppressing transcription termination and activating the hut operon for histidine utilization. In Bacillus cereus (strain AH820), this protein is Hut operon positive regulatory protein.